A 949-amino-acid polypeptide reads, in one-letter code: Glycine dehydrogenase (decarboxylating) (949 aa).

At Lys700 the chain carries N6-(pyridoxal phosphate)lysine.

This sequence belongs to the GcvP family. In terms of assembly, the glycine cleavage system is composed of four proteins: P, T, L and H. Pyridoxal 5'-phosphate serves as cofactor.

It carries out the reaction N(6)-[(R)-lipoyl]-L-lysyl-[glycine-cleavage complex H protein] + glycine + H(+) = N(6)-[(R)-S(8)-aminomethyldihydrolipoyl]-L-lysyl-[glycine-cleavage complex H protein] + CO2. The glycine cleavage system catalyzes the degradation of glycine. The P protein binds the alpha-amino group of glycine through its pyridoxal phosphate cofactor; CO(2) is released and the remaining methylamine moiety is then transferred to the lipoamide cofactor of the H protein. The chain is Glycine dehydrogenase (decarboxylating) from Flavobacterium johnsoniae (strain ATCC 17061 / DSM 2064 / JCM 8514 / BCRC 14874 / CCUG 350202 / NBRC 14942 / NCIMB 11054 / UW101) (Cytophaga johnsonae).